Reading from the N-terminus, the 494-residue chain is Glycerol kinase (494 aa).

Residue T13 coordinates ADP. Positions 13, 14, and 15 each coordinate ATP. T13 is a sn-glycerol 3-phosphate binding site. An ADP-binding site is contributed by R17. The sn-glycerol 3-phosphate site is built by R83, E84, Y135, and D244. Glycerol-binding residues include R83, E84, Y135, D244, and Q245. ADP is bound by residues T266 and G309. ATP is bound by residues T266, G309, Q313, and G410. ADP is bound by residues G410 and N414.

Belongs to the FGGY kinase family.

The enzyme catalyses glycerol + ATP = sn-glycerol 3-phosphate + ADP + H(+). The protein operates within polyol metabolism; glycerol degradation via glycerol kinase pathway; sn-glycerol 3-phosphate from glycerol: step 1/1. With respect to regulation, inhibited by fructose 1,6-bisphosphate (FBP). In terms of biological role, key enzyme in the regulation of glycerol uptake and metabolism. Catalyzes the phosphorylation of glycerol to yield sn-glycerol 3-phosphate. This is Glycerol kinase from Shewanella sp. (strain MR-4).